The chain runs to 386 residues: Formate-dependent phosphoribosylglycinamide formyltransferase (386 aa).

N(1)-(5-phospho-beta-D-ribosyl)glycinamide-binding positions include 15–16 (EL) and Glu-75. Residues Arg-107, Lys-148, 153 to 158 (SSGKGQ), 188 to 191 (EQFI), and Glu-196 each bind ATP. The 190-residue stretch at 112–301 (ALAAQQLNLQ…EFELHLRAIV (190 aa)) folds into the ATP-grasp domain. Residues Glu-260 and Glu-272 each contribute to the Mg(2+) site. N(1)-(5-phospho-beta-D-ribosyl)glycinamide is bound by residues Asp-279, Lys-349, and 356-357 (RR).

The protein belongs to the PurK/PurT family. Homodimer.

It carries out the reaction N(1)-(5-phospho-beta-D-ribosyl)glycinamide + formate + ATP = N(2)-formyl-N(1)-(5-phospho-beta-D-ribosyl)glycinamide + ADP + phosphate + H(+). It participates in purine metabolism; IMP biosynthesis via de novo pathway; N(2)-formyl-N(1)-(5-phospho-D-ribosyl)glycinamide from N(1)-(5-phospho-D-ribosyl)glycinamide (formate route): step 1/1. In terms of biological role, involved in the de novo purine biosynthesis. Catalyzes the transfer of formate to 5-phospho-ribosyl-glycinamide (GAR), producing 5-phospho-ribosyl-N-formylglycinamide (FGAR). Formate is provided by PurU via hydrolysis of 10-formyl-tetrahydrofolate. The polypeptide is Formate-dependent phosphoribosylglycinamide formyltransferase (Francisella tularensis subsp. tularensis (strain SCHU S4 / Schu 4)).